The chain runs to 290 residues: MPSQFRTIALIGKPDAPRIADTLAAIHSYLLTSGLEILVEHGCAGLFPRSARTGTMPELARQADIAVVVGGDGTLLGAARSLYAHGVPLVGINLGRLGFLVDISPNEAVDKLHAILSGACRAEERYPLAARLLRNGQTIAQGSAINEVVVHSGSATSMIELETAIDGVFLNSQRSDGLIVSTPTGSTAYALSAGGPILYPTLNATVLAPINPHTLSNRPIVISGDSLVTIAFRPNKEFRAQVSCDNVPFPDVGIEDRIEIRKAERPFRILHPTDYDFFQILRHKLNWSNR.

D72 (proton acceptor) is an active-site residue. NAD(+)-binding positions include 72-73, 146-147, R174, D176, and 187-192; these read DG, NE, and TAYALS.

The protein belongs to the NAD kinase family. A divalent metal cation is required as a cofactor.

Its subcellular location is the cytoplasm. The catalysed reaction is NAD(+) + ATP = ADP + NADP(+) + H(+). In terms of biological role, involved in the regulation of the intracellular balance of NAD and NADP, and is a key enzyme in the biosynthesis of NADP. Catalyzes specifically the phosphorylation on 2'-hydroxyl of the adenosine moiety of NAD to yield NADP. In Methylococcus capsulatus (strain ATCC 33009 / NCIMB 11132 / Bath), this protein is NAD kinase.